The chain runs to 288 residues: Undecaprenyl-diphosphatase (288 aa).

8 helical membrane-spanning segments follow: residues glycine 25–leucine 45, phenylalanine 53–tyrosine 73, tryptophan 93–leucine 113, leucine 121–isoleucine 141, valine 171–valine 191, serine 196–leucine 216, glycine 231–isoleucine 251, and phenylalanine 263–valine 283.

The protein belongs to the UppP family.

Its subcellular location is the cell membrane. The catalysed reaction is di-trans,octa-cis-undecaprenyl diphosphate + H2O = di-trans,octa-cis-undecaprenyl phosphate + phosphate + H(+). Catalyzes the dephosphorylation of undecaprenyl diphosphate (UPP). Confers resistance to bacitracin. The sequence is that of Undecaprenyl-diphosphatase from Streptococcus thermophilus (strain ATCC BAA-250 / LMG 18311).